Consider the following 457-residue polypeptide: Glycine receptor subunit alpha-1 (457 aa).

The N-terminal stretch at 1–28 is a signal peptide; it reads MYSFNTLRLYLWETIVFFSLAASKEAEA. At 29–250 the chain is on the extracellular side; the sequence is ARSAPKPMSP…RFHLERQMGY (222 aa). A glycan (N-linked (GlcNAc...) asparagine) is linked at asparagine 66. Glycine contacts are provided by arginine 93 and serine 157. Cysteine 166 and cysteine 180 form a disulfide bridge. Residues glutamate 220 and aspartate 222 each contribute to the Zn(2+) site. A disulfide bond links cysteine 226 and cysteine 237. A strychnine-binding site is contributed by 230 to 235; the sequence is YNTGKF. Threonine 232 lines the glycine pocket. Histidine 243 is a binding site for Zn(2+). Residues 251-272 form a helical membrane-spanning segment; the sequence is YLIQMYIPSLLIVILSWISFWI. Topologically, residues 273–277 are cytoplasmic; the sequence is NMDAA. The chain crosses the membrane as a helical span at residues 278 to 298; it reads PARVGLGITTVLTMTTQSSGS. Topologically, residues 299–309 are extracellular; it reads RASLPKVSYVK. Residues 310-330 form a helical membrane-spanning segment; sequence AIDIWMAVCLLFVFSALLEYA. Topologically, residues 331–425 are cytoplasmic; that stretch reads AVNFVSRQHK…FIQRAKKIDK (95 aa). The segment at 391 to 410 is disordered; the sequence is KGANNSNTTNPPPAPSKSPE. The helical transmembrane segment at 426 to 446 threads the bilayer; it reads ISRIGFPMAFLIFNMFYWIIY. Residues 447 to 457 lie on the Extracellular side of the membrane; sequence KIVRREDVHNQ.

The protein belongs to the ligand-gated ion channel (TC 1.A.9) family. Glycine receptor (TC 1.A.9.3) subfamily. GLRA1 sub-subfamily. In terms of assembly, interacts with GLRB to form heteropentameric channels; this is probably the predominant form in vivo. Heteropentamer composed of four GLRA1 subunits and one GLRB subunit. Heteropentamer composed of two GLRA1 and three GLRB. Heteropentamer composed of three GLRA1 and two GLRB. Homopentamer (in vitro). Both homopentamers and heteropentamers form functional ion channels, but their characteristics are subtly different.

The protein localises to the postsynaptic cell membrane. It localises to the synapse. It is found in the perikaryon. The protein resides in the cell projection. Its subcellular location is the dendrite. The protein localises to the cell membrane. The catalysed reaction is chloride(in) = chloride(out). With respect to regulation, channel opening is triggered by extracellular glycine. Channel characteristics depend on the subunit composition; heteropentameric channels are activated by lower glycine levels and display faster desensitization. Channel opening is also triggered by taurine and beta-alanine. Channel activity is potentiated by nanomolar concentrations of Zn(2+); half-maximal activation is observed with 37 nM Zn(2+). Inhibited by higher Zn(2+) levels; haf-maximal inhibition occurs at 20 uM Zn(2+). Inhibited by strychnine. Strychnine binding locks the channel in a closed conformation and prevents channel opening in response to extracellular glycine. Inhibited by lindane. Inhibited by picrotoxin. Its function is as follows. Subunit of heteromeric glycine-gated chloride channels. Plays an important role in the down-regulation of neuronal excitability. Contributes to the generation of inhibitory postsynaptic currents. Channel activity is potentiated by ethanol. Potentiation of channel activity by intoxicating levels of ethanol contribute to the sedative effects of ethanol. The polypeptide is Glycine receptor subunit alpha-1 (GLRA1) (Homo sapiens (Human)).